A 200-amino-acid chain; its full sequence is Large ribosomal subunit protein uL4 (200 aa).

The interval 38-72 is disordered; it reads GRQGTKQQKTRSDVAGGGKRPWRQKGTGRARAGTT.

This sequence belongs to the universal ribosomal protein uL4 family. As to quaternary structure, part of the 50S ribosomal subunit.

In terms of biological role, one of the primary rRNA binding proteins, this protein initially binds near the 5'-end of the 23S rRNA. It is important during the early stages of 50S assembly. It makes multiple contacts with different domains of the 23S rRNA in the assembled 50S subunit and ribosome. Functionally, forms part of the polypeptide exit tunnel. The polypeptide is Large ribosomal subunit protein uL4 (Pseudomonas entomophila (strain L48)).